Consider the following 559-residue polypeptide: Sesquiterpene synthase TPS3 (559 aa).

R275, D312, D316, R453, and D456 together coordinate (2E,6E)-farnesyl diphosphate. Residues D312 and D316 each contribute to the Mg(2+) site. The short motif at 312–316 is the DDXXD motif element; sequence DDTYD. The Mg(2+) site is built by D456, T460, and E464.

It belongs to the terpene synthase family. Tpsa subfamily. Monomer. It depends on Mg(2+) as a cofactor. Highly expressed in glandular trichomes. Expressed in roots and leaves.

It is found in the cytoplasm. It carries out the reaction (2E,6E)-farnesyl diphosphate = (+)-(R)-germacrene A + diphosphate. The protein operates within secondary metabolite biosynthesis; terpenoid biosynthesis. Sesquiterpene synthase involved in the biosynthesis of volatile compounds. Mediates the conversion of (2E,6E)-farnesyl diphosphate (FPP) into (+)-(R)-germacrene A. The sequence is that of Sesquiterpene synthase TPS3 from Xanthium strumarium (Rough cocklebur).